The primary structure comprises 129 residues: Follitropin subunit beta (129 aa).

Residues 1 to 18 (MKSVQLCLLLWCWRAICC) form the signal peptide. Intrachain disulfides connect Cys21–Cys69, Cys35–Cys84, Cys38–Cys122, Cys46–Cys100, Cys50–Cys102, and Cys105–Cys112. N-linked (GlcNAc...) asparagine glycosylation is found at Asn25 and Asn42.

The protein belongs to the glycoprotein hormones subunit beta family. Heterodimer. The active follitropin is a heterodimer composed of an alpha chain/CGA shared with other hormones and a unique beta chain/FSHB shown here.

It localises to the secreted. Its function is as follows. Together with the alpha chain CGA constitutes follitropin, the follicle-stimulating hormone, and provides its biological specificity to the hormone heterodimer. Binds FSHR, a G protein-coupled receptor, on target cells to activate downstream signaling pathways. Follitropin is involved in follicle development and spermatogenesis in reproductive organs. This chain is Follitropin subunit beta (FSHB), found in Meriones unguiculatus (Mongolian jird).